The following is a 492-amino-acid chain: Bifunctional purine biosynthesis protein PurH (492 aa).

One can recognise an MGS-like domain in the interval 1 to 144; that stretch reads MKKAILSVSN…KNYKHVTTIV (144 aa).

Belongs to the PurH family.

The catalysed reaction is (6R)-10-formyltetrahydrofolate + 5-amino-1-(5-phospho-beta-D-ribosyl)imidazole-4-carboxamide = 5-formamido-1-(5-phospho-D-ribosyl)imidazole-4-carboxamide + (6S)-5,6,7,8-tetrahydrofolate. The enzyme catalyses IMP + H2O = 5-formamido-1-(5-phospho-D-ribosyl)imidazole-4-carboxamide. The protein operates within purine metabolism; IMP biosynthesis via de novo pathway; 5-formamido-1-(5-phospho-D-ribosyl)imidazole-4-carboxamide from 5-amino-1-(5-phospho-D-ribosyl)imidazole-4-carboxamide (10-formyl THF route): step 1/1. It functions in the pathway purine metabolism; IMP biosynthesis via de novo pathway; IMP from 5-formamido-1-(5-phospho-D-ribosyl)imidazole-4-carboxamide: step 1/1. The polypeptide is Bifunctional purine biosynthesis protein PurH (Staphylococcus aureus (strain MRSA252)).